A 616-amino-acid polypeptide reads, in one-letter code: Chaperone protein HscA (616 aa).

Belongs to the heat shock protein 70 family.

Its function is as follows. Chaperone involved in the maturation of iron-sulfur cluster-containing proteins. Has a low intrinsic ATPase activity which is markedly stimulated by HscB. Involved in the maturation of IscU. The polypeptide is Chaperone protein HscA (Escherichia coli O139:H28 (strain E24377A / ETEC)).